The chain runs to 165 residues: 3-isopropylmalate dehydratase small subunit (165 aa).

This sequence belongs to the LeuD family. LeuD type 2 subfamily. In terms of assembly, heterodimer of LeuC and LeuD.

The catalysed reaction is (2R,3S)-3-isopropylmalate = (2S)-2-isopropylmalate. Its pathway is amino-acid biosynthesis; L-leucine biosynthesis; L-leucine from 3-methyl-2-oxobutanoate: step 2/4. Catalyzes the isomerization between 2-isopropylmalate and 3-isopropylmalate, via the formation of 2-isopropylmaleate. This is 3-isopropylmalate dehydratase small subunit from Hydrogenobaculum sp. (strain Y04AAS1).